The chain runs to 600 residues: Zinc metalloproteinase-disintegrin-like cobrin (600 aa).

An N-terminal signal peptide occupies residues 1-8 (MIQLSWSS). A propeptide spanning residues 9–179 (IILESGNVND…DEPIKKTSLL (171 aa)) is cleaved from the precursor. In terms of domain architecture, Peptidase M12B spans 193-388 (KYIEFYMVVD…DRPQCILNKP (196 aa)). Ca(2+) contacts are provided by Glu-196 and Asp-280. Cystine bridges form between Cys-304–Cys-383, Cys-344–Cys-367, and Cys-346–Cys-351. Zn(2+)-binding residues include His-329, His-333, and His-339. Positions 383, 386, 398, 401, 403, 405, 408, and 411 each coordinate Ca(2+). The Disintegrin domain maps to 396–482 (PPICGNYFVE…ECPTDVFQRN (87 aa)). Cystine bridges form between Cys-399–Cys-428, Cys-410–Cys-423, Cys-412–Cys-418, Cys-422–Cys-445, Cys-436–Cys-442, Cys-441–Cys-467, Cys-454–Cys-474, Cys-461–Cys-492, Cys-486–Cys-497, Cys-504–Cys-554, Cys-519–Cys-562, Cys-532–Cys-542, Cys-549–Cys-588, and Cys-582–Cys-593. The N-linked (GlcNAc...) asparagine glycan is linked to Asn-424. The D/ECD-tripeptide signature appears at 460–462 (DCD). Positions 462, 463, 465, 477, and 478 each coordinate Ca(2+).

This sequence belongs to the venom metalloproteinase (M12B) family. P-III subfamily. P-IIIa sub-subfamily. In terms of assembly, monomer. The cofactor is Zn(2+). Expressed by the venom gland.

The protein resides in the secreted. Snake venom zinc metalloproteinase that may cleave complement protein C3 into C3c-like (C3o). In Naja kaouthia (Monocled cobra), this protein is Zinc metalloproteinase-disintegrin-like cobrin.